The sequence spans 295 residues: THO complex subunit 4C (295 aa).

The tract at residues 1 to 67 (MSDALNMTLD…GPLAVNTRPS (67 aa)) is disordered. S2 is subject to N-acetylserine. Residues 11–22 (EIVKKSKSERSA) show a composition bias toward basic and acidic residues. Gly residues predominate over residues 38–55 (GRGGPNGVVGGGRGGGPV). The RRM domain occupies 107-184 (TTVYITNLDQ…RPMKLEILGG (78 aa)). The interval 212 to 295 (QGVRGGRVGR…SYHAEAMNIS (84 aa)) is disordered. Composition is skewed to gly residues over residues 213-227 (GVRG…GSGP) and 242-267 (VTAG…SGGR). Over residues 271–288 (KPVEKSAADLDKDLESYH) the composition is skewed to basic and acidic residues.

The protein belongs to the ALYREF family. In terms of assembly, interacts with PARP1.

It localises to the nucleus. The protein resides in the nucleoplasm. It is found in the nucleolus. In terms of biological role, export adapter involved in nuclear export of spliced and unspliced mRNA. This chain is THO complex subunit 4C, found in Arabidopsis thaliana (Mouse-ear cress).